Here is a 502-residue protein sequence, read N- to C-terminus: Arabinose import ATP-binding protein AraG (502 aa).

2 consecutive ABC transporter domains span residues 5–240 (LEFS…MVGR) and 253–496 (LGGI…LPDK). 37–44 (GENGAGKS) contacts ATP.

The protein belongs to the ABC transporter superfamily. Arabinose importer (TC 3.A.1.2.2) family. In terms of assembly, the complex is composed of two ATP-binding proteins (AraG), two transmembrane proteins (AraH) and a solute-binding protein (AraF).

It localises to the cell inner membrane. It catalyses the reaction L-arabinose(out) + ATP + H2O = L-arabinose(in) + ADP + phosphate + H(+). Functionally, part of the ABC transporter complex AraFGH involved in arabinose import. Responsible for energy coupling to the transport system. This chain is Arabinose import ATP-binding protein AraG, found in Rhizobium johnstonii (strain DSM 114642 / LMG 32736 / 3841) (Rhizobium leguminosarum bv. viciae).